The sequence spans 642 residues: MPVITLPDGSQRHFDHPVSPLDVARDIGPGLAKACIAGRVNGELVDAGDLIESDAQLAIITIKDAEGLEIMRHSCAHLLGHAIKQLWPDTKMAIGPVIDNGFYYDVDIDRTLTQEDLDLLEKRMHELADKDYDVIKKKVSWQEARDTFAARGEDYKVAILDENISHDDRPGLYHHEEYVDMCRGPHVPNMRFCHHFKLQKTSGAYWRGDSKNKMLQRIYGTAWADKKQLNAYLQRLEEAAKRDHRKIGKQLDLYHMQEEAPGMVFWHNDGWTIFRELEAFVRMKLKEYQYQEVKGPFMMDRVLWEKTGHWENYKDAMFTTSSENREYCIKPMNCPGHVQIFNQGLKSYRDLPLRMGEFGSCHRNEPSGSLHGLMRVRGFTQDDAHIFCTEEQVRAEVNECIRMVYDVYGTFGFDKIAVKLSTRPEKRIGTDDMWTRAEEDLAAALTENGIPFEYQPGEGAFYGPKIEFTLHDCLDRAWQCGTVQLDFFLPGRLGASYVGENNDRVVPVMIHRAILGSMERFIGILTEEYAGFYPTWIAPVQVVVMNITDSQSDYVQQLTKKLQDAGIRVKADLRNEKIGFKIREHTLRRVPYMLVCGDKEVESGKVAVRTRRGKDLGSLDVNEVVDKLLKEIRSRSLHQLEE.

Residues 1–61 (MPVITLPDGS…ESDAQLAIIT (61 aa)) form the TGS domain. The tract at residues 243–534 (DHRKIGKQLD…LTEEYAGFYP (292 aa)) is catalytic. Cys-334, His-385, and His-511 together coordinate Zn(2+).

This sequence belongs to the class-II aminoacyl-tRNA synthetase family. Homodimer. Zn(2+) serves as cofactor.

The protein localises to the cytoplasm. It catalyses the reaction tRNA(Thr) + L-threonine + ATP = L-threonyl-tRNA(Thr) + AMP + diphosphate + H(+). Functionally, catalyzes the attachment of threonine to tRNA(Thr) in a two-step reaction: L-threonine is first activated by ATP to form Thr-AMP and then transferred to the acceptor end of tRNA(Thr). Also edits incorrectly charged L-seryl-tRNA(Thr). The sequence is that of Threonine--tRNA ligase from Serratia proteamaculans (strain 568).